Reading from the N-terminus, the 352-residue chain is tRNA pseudouridine synthase D (352 aa).

The active-site Nucleophile is Asp81. The 147-residue stretch at 157–303 (GVPNYFGLQR…MLHERRILRL (147 aa)) folds into the TRUD domain.

The protein belongs to the pseudouridine synthase TruD family.

The catalysed reaction is uridine(13) in tRNA = pseudouridine(13) in tRNA. In terms of biological role, responsible for synthesis of pseudouridine from uracil-13 in transfer RNAs. The sequence is that of tRNA pseudouridine synthase D from Azotobacter vinelandii (strain DJ / ATCC BAA-1303).